Consider the following 252-residue polypeptide: 5'-nucleotidase SurE (252 aa).

4 residues coordinate a divalent metal cation: D8, D9, S39, and N91.

Belongs to the SurE nucleotidase family. It depends on a divalent metal cation as a cofactor.

It localises to the cytoplasm. The enzyme catalyses a ribonucleoside 5'-phosphate + H2O = a ribonucleoside + phosphate. In terms of biological role, nucleotidase that shows phosphatase activity on nucleoside 5'-monophosphates. The sequence is that of 5'-nucleotidase SurE from Legionella pneumophila (strain Paris).